A 262-amino-acid polypeptide reads, in one-letter code: tRNA pseudouridine synthase A (262 aa).

Aspartate 51 (nucleophile) is an active-site residue. Tyrosine 109 is a substrate binding site.

This sequence belongs to the tRNA pseudouridine synthase TruA family. In terms of assembly, homodimer.

The enzyme catalyses uridine(38/39/40) in tRNA = pseudouridine(38/39/40) in tRNA. In terms of biological role, formation of pseudouridine at positions 38, 39 and 40 in the anticodon stem and loop of transfer RNAs. This Legionella pneumophila (strain Lens) protein is tRNA pseudouridine synthase A.